The chain runs to 408 residues: Phosphoenolpyruvate/phosphate translocator 1, chloroplastic (408 aa).

A chloroplast-targeting transit peptide spans 1 to 66 (MQSAAAVGLL…ISARRIGLVP (66 aa)). Helical transmembrane passes span 105-125 (TLQL…FNIY), 139-159 (ITNV…ITGI), 165-185 (ISGA…MGNL), 222-242 (PTPF…LASL), 245-262 (ASFN…NVTF), 283-303 (ITLF…VTLL), and 375-395 (TPVS…VFLY). The region spanning 124–241 (IYNKQVLKVF…PIVGGVALAS (118 aa)) is the EamA domain.

The protein belongs to the TPT transporter family. PPT (TC 2.A.7.9) subfamily.

It localises to the plastid. The protein resides in the chloroplast membrane. Functionally, phosphoenolpyruvate/phosphate translocator that transports phosphoenolpyruvate (PEP) and dihydroxyacetone phosphate. The chain is Phosphoenolpyruvate/phosphate translocator 1, chloroplastic (PPT1) from Oryza sativa subsp. japonica (Rice).